We begin with the raw amino-acid sequence, 209 residues long: Small ribosomal subunit protein uS3 (209 aa).

The KH type-2 domain occupies 17–86; that stretch reads IDEYLEKELR…NPQIEVEEIK (70 aa).

The protein belongs to the universal ribosomal protein uS3 family. Part of the 30S ribosomal subunit.

In terms of biological role, binds the lower part of the 30S subunit head. In Thermococcus gammatolerans (strain DSM 15229 / JCM 11827 / EJ3), this protein is Small ribosomal subunit protein uS3.